A 202-amino-acid polypeptide reads, in one-letter code: Adenylyl-sulfate kinase (202 aa).

31-38 lines the ATP pocket; sequence GLSASGKS. Catalysis depends on Ser-105, which acts as the Phosphoserine intermediate.

It belongs to the APS kinase family.

The enzyme catalyses adenosine 5'-phosphosulfate + ATP = 3'-phosphoadenylyl sulfate + ADP + H(+). The protein operates within sulfur metabolism; hydrogen sulfide biosynthesis; sulfite from sulfate: step 2/3. In terms of biological role, catalyzes the synthesis of activated sulfate. This is Adenylyl-sulfate kinase (MET14) from Saccharomyces bayanus (Yeast).